An 86-amino-acid chain; its full sequence is NAD(P)H-quinone oxidoreductase subunit O (86 aa).

Belongs to the complex I NdhO subunit family. As to quaternary structure, NDH-1 can be composed of about 15 different subunits; different subcomplexes with different compositions have been identified which probably have different functions.

The protein resides in the cellular thylakoid membrane. It carries out the reaction a plastoquinone + NADH + (n+1) H(+)(in) = a plastoquinol + NAD(+) + n H(+)(out). The enzyme catalyses a plastoquinone + NADPH + (n+1) H(+)(in) = a plastoquinol + NADP(+) + n H(+)(out). In terms of biological role, NDH-1 shuttles electrons from an unknown electron donor, via FMN and iron-sulfur (Fe-S) centers, to quinones in the respiratory and/or the photosynthetic chain. The immediate electron acceptor for the enzyme in this species is believed to be plastoquinone. Couples the redox reaction to proton translocation, and thus conserves the redox energy in a proton gradient. Cyanobacterial NDH-1 also plays a role in inorganic carbon-concentration. This Prochlorococcus marinus (strain SARG / CCMP1375 / SS120) protein is NAD(P)H-quinone oxidoreductase subunit O.